The sequence spans 68 residues: Large ribosomal subunit protein bL32 (68 aa).

The disordered stretch occupies residues 1-20 (MAVQQNKVSKSRRNNRRAHD).

This sequence belongs to the bacterial ribosomal protein bL32 family.

In Ruegeria sp. (strain TM1040) (Silicibacter sp.), this protein is Large ribosomal subunit protein bL32.